A 277-amino-acid chain; its full sequence is Membrane protein insertase YidC 2 (277 aa).

The first 22 residues, 1 to 22, serve as a signal peptide directing secretion; the sequence is MKKYRKILAMLAVLAIVLVLSG. Cys23 carries the N-palmitoyl cysteine lipid modification. Cys23 is lipidated: S-diacylglycerol cysteine. The next 5 membrane-spanning stretches (helical) occupy residues 35–55, 60–80, 130–150, 170–190, and 208–228; these read FWDG…SNLF, GLGI…LMIF, ASML…QAIW, PYYV…WLAM, and PVII…YWVI. Positions 251 to 266 are enriched in basic and acidic residues; sequence EAKKQAERDRKRTLEK. Positions 251–277 are disordered; sequence EAKKQAERDRKRTLEKARKRAIRNHKR. Basic residues predominate over residues 267-277; the sequence is ARKRAIRNHKR.

Belongs to the OXA1/ALB3/YidC family. Type 2 subfamily.

Its subcellular location is the cell membrane. Required for the insertion and/or proper folding and/or complex formation of integral membrane proteins into the membrane. Involved in integration of membrane proteins that insert both dependently and independently of the Sec translocase complex, as well as at least some lipoproteins. This is Membrane protein insertase YidC 2 from Lactiplantibacillus plantarum (strain ATCC BAA-793 / NCIMB 8826 / WCFS1) (Lactobacillus plantarum).